The chain runs to 610 residues: T-cell immunomodulatory protein (610 aa).

The signal sequence occupies residues 1-32 (MAAGRLPSARAVLAPLFLGLALLSVGPAPARA). 7 N-linked (GlcNAc...) asparagine glycosylation sites follow: Asn35, Asn123, Asn138, Asn145, Asn150, Asn175, and Asn241. Residues 98–135 (LVTSVVPGDYDGDSQMDVLLTYFPQNHTNSELGAVIFW) form an FG-GAP 1; atypical repeat. An FG-GAP 2; atypical repeat occupies 153-183 (FHDQPLIMDFNGDLIPDVFGITNESSQPQIL). The stretch at 256–291 (VVGQSAFADFDGDGHMDHLLPGCEDKDCQKSAIYLM) is one FG-GAP 3; atypical repeat. N-linked (GlcNAc...) asparagine glycosylation is found at Asn351, Asn369, and Asn480. Residues 565 to 585 (VLLTAVALIGVCIFILAIIAI) traverse the membrane as a helical segment.

This sequence belongs to the TIP family. As to quaternary structure, interacts with RUVBL1, RUVBL2 and alpha-tubulin.

The protein resides in the secreted. Its subcellular location is the membrane. Its function is as follows. Modulator of T-cell function. Has a protective effect in graft versus host disease model. This Mus musculus (Mouse) protein is T-cell immunomodulatory protein.